The following is a 403-amino-acid chain: uncharacterized protein (403 aa).

This is an uncharacterized protein from Aquifex aeolicus (strain VF5).